The primary structure comprises 199 residues: Probable GTP-binding protein EngB (199 aa).

One can recognise an EngB-type G domain in the interval 28 to 199 (DLPEIALAGR…DSWDAILEQV (172 aa)). Residues 36–43 (GRSNVGKS), 63–67 (GKTQL), 81–84 (DVPG), 148–151 (TKAD), and 180–182 (FSS) each bind GTP. Mg(2+) is bound by residues serine 43 and threonine 65.

Belongs to the TRAFAC class TrmE-Era-EngA-EngB-Septin-like GTPase superfamily. EngB GTPase family. The cofactor is Mg(2+).

Necessary for normal cell division and for the maintenance of normal septation. The sequence is that of Probable GTP-binding protein EngB from Streptococcus pyogenes serotype M49 (strain NZ131).